We begin with the raw amino-acid sequence, 30 residues long: Cycloviolacin-H1 (30 aa).

The segment at residues 1–30 (GIPCGESCVYIPCLTSAIGCSCKSKVCYRN) is a cross-link (cyclopeptide (Gly-Asn)). 3 cysteine pairs are disulfide-bonded: Cys4/Cys20, Cys8/Cys22, and Cys13/Cys27.

The protein belongs to the cyclotide family. Bracelet subfamily. This is a cyclic peptide.

In terms of biological role, probably participates in a plant defense mechanism. The sequence is that of Cycloviolacin-H1 from Viola hederacea (Australian violet).